The sequence spans 386 residues: Leupaxin (386 aa).

M1 is subject to N-acetylmethionine. The LD motif 1 signature appears at 3–15; the sequence is ELDALLEELERST. Residues 12–51 are disordered; it reads ERSTLQDSDEYSNSAPLPLDQSSRKESNLDETSKMLSVQD. Residues 16-26 show a composition bias toward polar residues; the sequence is LQDSDEYSNSA. A Phosphoserine modification is found at S19. Y22 carries the phosphotyrosine modification. The span at 33 to 44 shows a compositional bias: basic and acidic residues; sequence SSRKESNLDETS. Position 62 is a phosphotyrosine (Y62). Short sequence motifs (LD motif) lie at residues 70 to 82 and 92 to 103; these read NVYS…KKSP and QLDELMAHLSEM. Residue Y72 is modified to Phosphotyrosine; by LYN. S81 bears the Phosphoserine mark. LIM zinc-binding domains are found at residues 150 to 209, 210 to 267, 268 to 327, and 328 to 386; these read GHCA…LFSP, RCAY…AMFS, PKCG…RRGT, and LCHG…LFSL.

It belongs to the paxillin family. As to quaternary structure, interacts with unphosphorylated ITGA4. Interacts with AR and SRF. Interacts with PTK2B/PYK2, PTPN22 and PTPN12. Interacts (via LD motif 3) with LYN and the interaction is induced upon B-cell antigen receptor (BCR) activation. Interacts (via LD motif 3) with PTK2/FAK. Post-translationally, phosphorylated on tyrosine residues. Phosphorylation on Tyr-72 is important for its inhibitory function. Bombesin stimulates phosphorylation on Tyr-22, Tyr-62 and Tyr-72.

Its subcellular location is the cytoplasm. It is found in the cell junction. It localises to the focal adhesion. The protein resides in the nucleus. The protein localises to the perinuclear region. Its subcellular location is the cell projection. It is found in the podosome. It localises to the cell membrane. Transcriptional coactivator for androgen receptor (AR) and serum response factor (SRF). Contributes to the regulation of cell adhesion, spreading and cell migration and acts as a negative regulator in integrin-mediated cell adhesion events. Suppresses the integrin-induced tyrosine phosphorylation of paxillin (PXN). May play a critical role as an adapter protein in the formation of the adhesion zone in osteoclasts. Negatively regulates B-cell antigen receptor (BCR) signaling. The sequence is that of Leupaxin (LPXN) from Oryctolagus cuniculus (Rabbit).